A 205-amino-acid polypeptide reads, in one-letter code: MSDQLFERTMAFAGILQAVAQVQYIARHGDSDKEALAASLQSVLVTNPESTSDVYADKFALRKGYELIVSQLGDAKQKDVEVTRYLVGILALERKLTRSSNAMGMLSERINQIHRQLSHFEITDEQVIANFAGIYSDIISELGPKLQISGNPEFLKRTQTQQKIRALLLSAMRSAVLWRQLGGKRRHLVFSRKTIVDTAMKSLTL.

The protein belongs to the HflD family.

It localises to the cytoplasm. The protein localises to the cell inner membrane. This is High frequency lysogenization protein HflD homolog from Shewanella pealeana (strain ATCC 700345 / ANG-SQ1).